The chain runs to 334 residues: Holliday junction branch migration complex subunit RuvB (334 aa).

Positions 4 to 184 (ADRLIQPQIQ…FGIPLRLEFY (181 aa)) are large ATPase domain (RuvB-L). Residues Arg24, Gly65, Lys68, Thr69, Thr70, 131–133 (EDY), Arg174, Tyr184, and Arg221 contribute to the ATP site. Residue Thr69 coordinates Mg(2+). Positions 185–255 (NIKDLSTIVT…VAEHALDLLD (71 aa)) are small ATPAse domain (RuvB-S). Positions 258–334 (SEGFDYMDRK…YQHFELIKPE (77 aa)) are head domain (RuvB-H). Positions 294, 313, and 318 each coordinate DNA.

It belongs to the RuvB family. Homohexamer. Forms an RuvA(8)-RuvB(12)-Holliday junction (HJ) complex. HJ DNA is sandwiched between 2 RuvA tetramers; dsDNA enters through RuvA and exits via RuvB. An RuvB hexamer assembles on each DNA strand where it exits the tetramer. Each RuvB hexamer is contacted by two RuvA subunits (via domain III) on 2 adjacent RuvB subunits; this complex drives branch migration. In the full resolvosome a probable DNA-RuvA(4)-RuvB(12)-RuvC(2) complex forms which resolves the HJ.

It localises to the cytoplasm. It carries out the reaction ATP + H2O = ADP + phosphate + H(+). Functionally, the RuvA-RuvB-RuvC complex processes Holliday junction (HJ) DNA during genetic recombination and DNA repair, while the RuvA-RuvB complex plays an important role in the rescue of blocked DNA replication forks via replication fork reversal (RFR). RuvA specifically binds to HJ cruciform DNA, conferring on it an open structure. The RuvB hexamer acts as an ATP-dependent pump, pulling dsDNA into and through the RuvAB complex. RuvB forms 2 homohexamers on either side of HJ DNA bound by 1 or 2 RuvA tetramers; 4 subunits per hexamer contact DNA at a time. Coordinated motions by a converter formed by DNA-disengaged RuvB subunits stimulates ATP hydrolysis and nucleotide exchange. Immobilization of the converter enables RuvB to convert the ATP-contained energy into a lever motion, pulling 2 nucleotides of DNA out of the RuvA tetramer per ATP hydrolyzed, thus driving DNA branch migration. The RuvB motors rotate together with the DNA substrate, which together with the progressing nucleotide cycle form the mechanistic basis for DNA recombination by continuous HJ branch migration. Branch migration allows RuvC to scan DNA until it finds its consensus sequence, where it cleaves and resolves cruciform DNA. The protein is Holliday junction branch migration complex subunit RuvB of Shewanella baltica (strain OS155 / ATCC BAA-1091).